The following is a 240-amino-acid chain: Cell division protein FtsQ (240 aa).

Topologically, residues 1–7 are cytoplasmic; the sequence is MTGPGLR. A helical membrane pass occupies residues 8 to 28; it reads LLAGMGLAGALVLGLSLWLHF. Residues 29 to 240 lie on the Periplasmic side of the membrane; it reads DPDQHLPIGS…EADNDGGNAR (212 aa). In terms of domain architecture, POTRA spans 34–102; sequence LPIGSIQITG…DTLEVHVTEP (69 aa).

The protein belongs to the FtsQ/DivIB family. FtsQ subfamily. In terms of assembly, part of a complex composed of FtsB, FtsL and FtsQ.

The protein localises to the cell inner membrane. Functionally, essential cell division protein. May link together the upstream cell division proteins, which are predominantly cytoplasmic, with the downstream cell division proteins, which are predominantly periplasmic. May control correct divisome assembly. This Thioalkalivibrio sp. (strain K90mix) protein is Cell division protein FtsQ.